The following is a 205-amino-acid chain: CASP-like protein 0U1 (205 aa).

The Cytoplasmic segment spans residues 1 to 38 (MDDAPGASDEAREPLLKRVGASVEGTSLMNHRLMKNPK). A helical membrane pass occupies residues 39-57 (FRALLVESLMALTTFSFMA). At 58–89 (KQTEGLAGPELSTLNDCGEAGCGFTKFYQFKG) the chain is on the extracellular side. Residues 90–110 (VVGVYAGFWAYTVILIAMYVI) traverse the membrane as a helical segment. At 111–124 (RKAPPPGTEFASYA) the chain is on the cytoplasmic side. A helical transmembrane segment spans residues 125 to 145 (LFTAAMATFVVMSITECASVV). The Extracellular portion of the chain corresponds to 146–159 (LSSDYYVCKNADYS). Residues 160–180 (LVSLIFAAATIVLNCLTCAFA) form a helical membrane-spanning segment. At 181–205 (WRQWGELKFVGLPKTLSALTETYPG) the chain is on the cytoplasmic side.

It belongs to the Casparian strip membrane proteins (CASP) family. In terms of assembly, homodimer and heterodimers.

It localises to the cell membrane. The protein is CASP-like protein 0U1 of Ostreococcus lucimarinus (strain CCE9901).